The following is a 189-amino-acid chain: Peptidyl-tRNA hydrolase (189 aa).

A tRNA-binding site is contributed by Y14. The active-site Proton acceptor is H19. TRNA contacts are provided by Y64, N66, and N112.

The protein belongs to the PTH family. Monomer.

It localises to the cytoplasm. It carries out the reaction an N-acyl-L-alpha-aminoacyl-tRNA + H2O = an N-acyl-L-amino acid + a tRNA + H(+). In terms of biological role, hydrolyzes ribosome-free peptidyl-tRNAs (with 1 or more amino acids incorporated), which drop off the ribosome during protein synthesis, or as a result of ribosome stalling. Catalyzes the release of premature peptidyl moieties from peptidyl-tRNA molecules trapped in stalled 50S ribosomal subunits, and thus maintains levels of free tRNAs and 50S ribosomes. This Brevibacillus brevis (strain 47 / JCM 6285 / NBRC 100599) protein is Peptidyl-tRNA hydrolase.